Consider the following 20-residue polypeptide: SPAFQAQKQAKVNDVLDKLY.

This sequence belongs to the tyrosinase family. Hemocyanin subfamily. In terms of tissue distribution, hemolymph.

Its subcellular location is the secreted. The protein resides in the extracellular space. Hemocyanins are copper-containing oxygen carriers occurring freely dissolved in the hemolymph of many mollusks and arthropods. In Homarus americanus (American lobster), this protein is Hemocyanin subunit 6.